Here is a 239-residue protein sequence, read N- to C-terminus: Probable plastid-lipid-associated protein 8, chloroplastic (239 aa).

The transit peptide at Met1 to Ser52 directs the protein to the chloroplast. Residue Ser53 is modified to N-acetylserine.

This sequence belongs to the PAP/fibrillin family.

The protein resides in the plastid. The protein localises to the chloroplast. The chain is Probable plastid-lipid-associated protein 8, chloroplastic (PAP8) from Arabidopsis thaliana (Mouse-ear cress).